The chain runs to 455 residues: Argininosuccinate lyase (455 aa).

This sequence belongs to the lyase 1 family. Argininosuccinate lyase subfamily.

The protein resides in the cytoplasm. It carries out the reaction 2-(N(omega)-L-arginino)succinate = fumarate + L-arginine. The protein operates within amino-acid biosynthesis; L-arginine biosynthesis; L-arginine from L-ornithine and carbamoyl phosphate: step 3/3. This is Argininosuccinate lyase from Shewanella baltica (strain OS223).